The primary structure comprises 122 residues: Small ribosomal subunit protein uS13 (122 aa).

Residues 98–122 (VRGQRTHTNARTRKGPAKAIAGKKK) are disordered.

It belongs to the universal ribosomal protein uS13 family. In terms of assembly, part of the 30S ribosomal subunit. Forms a loose heterodimer with protein S19. Forms two bridges to the 50S subunit in the 70S ribosome.

Located at the top of the head of the 30S subunit, it contacts several helices of the 16S rRNA. In the 70S ribosome it contacts the 23S rRNA (bridge B1a) and protein L5 of the 50S subunit (bridge B1b), connecting the 2 subunits; these bridges are implicated in subunit movement. Contacts the tRNAs in the A and P-sites. The protein is Small ribosomal subunit protein uS13 of Roseobacter denitrificans (strain ATCC 33942 / OCh 114) (Erythrobacter sp. (strain OCh 114)).